Consider the following 256-residue polypeptide: Thiazole synthase (256 aa).

Lys-95 functions as the Schiff-base intermediate with DXP in the catalytic mechanism. Residues Gly-156, 182–183, and 204–205 contribute to the 1-deoxy-D-xylulose 5-phosphate site; these read AG and NT.

This sequence belongs to the ThiG family. As to quaternary structure, homotetramer. Forms heterodimers with either ThiH or ThiS.

The protein localises to the cytoplasm. The catalysed reaction is [ThiS sulfur-carrier protein]-C-terminal-Gly-aminoethanethioate + 2-iminoacetate + 1-deoxy-D-xylulose 5-phosphate = [ThiS sulfur-carrier protein]-C-terminal Gly-Gly + 2-[(2R,5Z)-2-carboxy-4-methylthiazol-5(2H)-ylidene]ethyl phosphate + 2 H2O + H(+). It participates in cofactor biosynthesis; thiamine diphosphate biosynthesis. In terms of biological role, catalyzes the rearrangement of 1-deoxy-D-xylulose 5-phosphate (DXP) to produce the thiazole phosphate moiety of thiamine. Sulfur is provided by the thiocarboxylate moiety of the carrier protein ThiS. In vitro, sulfur can be provided by H(2)S. In Photobacterium profundum (strain SS9), this protein is Thiazole synthase.